The chain runs to 238 residues: Leucine-rich repeat-containing protein 57 (238 aa).

LRR repeat units lie at residues 10–36 (LETS…LQKL), 37–62 (TANL…SFQH), 64–82 (KSFT…DIGK), 83–106 (LKKL…IGQL), 108–128 (SLRT…GLGT), 129–152 (LRQL…VAEL), 154–173 (AIEI…EVSR), and 174–199 (TPRL…ILTD).

This Danio rerio (Zebrafish) protein is Leucine-rich repeat-containing protein 57 (lrrc57).